Consider the following 96-residue polypeptide: Prokineticin Bm8-b (96 aa).

The N-terminal stretch at 1 to 19 (MKCFAQIVVLLLVIAFSHG) is a signal peptide. 4 disulfides stabilise this stretch: cysteine 32–cysteine 50, cysteine 37–cysteine 78, cysteine 60–cysteine 86, and cysteine 80–cysteine 95.

This sequence belongs to the AVIT (prokineticin) family. As to expression, expressed by the skin glands.

It localises to the secreted. Functionally, potent agonist for both PKR1/PROKR1 and PKR2/PROKR2, and inducer of a potent and long-lasting hyperalgesia. Also potentiates capsaicin-induced TRPV1 current, when tested on DRG neurons. At subnanomolar concentrations, this protein both induces potent chemotaxis of macrophages and stimulates LPS-induced production of the pro-inflammatory cytokines IL-1 and IL-12. In vivo, potently stimulates the contraction of the guinea-pig gastrointestinal (GI) smooth muscle (nanomolar concentration). The chain is Prokineticin Bm8-b from Bombina maxima (Giant fire-bellied toad).